A 407-amino-acid chain; its full sequence is MSIENKNTGVKKVVLAYSGGLDTSAIIPWLKETYDNCEIIAFCADVGQGEEELVGLTEKALASGASECHIVDLKEEFVKDYIYPTMATGAIYEGTYLLGTSMARPIIAKAQVEVARKVGADALCHGCTGKGNDQVRFEGCFAALAPDLKVIAPWREWTMQSREDLLAYLAERNIKTSASATKIYSRDANAFHISHEGGELEDPWNEPSKGVWTLTADPEDAPNQAEYVSLEVEHGRVTKVNGEALTPYAALMKLNAIAAPHGVGRIDITENRLVGMKSRGCYETPGGTVMFAALRAIEELVLDKTSRTWREQVGAQMAHLVYDGRWFTPLCKSLLAASESLAESVNGEVVVKLYKGHAIAVKKRSPNSLYSEAFATFGEDQVYDQKHAEGFIRLYSLASRIRALNAK.

ATP contacts are provided by residues 16-24 (AYSGGLDTS) and Ala-44. The L-citrulline site is built by Tyr-96 and Ser-101. Gly-126 contacts ATP. 3 residues coordinate L-aspartate: Thr-128, Asn-132, and Asp-133. Residue Asn-132 coordinates L-citrulline. The L-citrulline site is built by Arg-136, Ser-185, Ser-194, Glu-270, and Tyr-282.

It belongs to the argininosuccinate synthase family. Type 1 subfamily. Homotetramer.

Its subcellular location is the cytoplasm. It catalyses the reaction L-citrulline + L-aspartate + ATP = 2-(N(omega)-L-arginino)succinate + AMP + diphosphate + H(+). The protein operates within amino-acid biosynthesis; L-arginine biosynthesis; L-arginine from L-ornithine and carbamoyl phosphate: step 2/3. In Shewanella sp. (strain ANA-3), this protein is Argininosuccinate synthase.